Here is a 154-residue protein sequence, read N- to C-terminus: MQIILLEKLDNLGNKGDILFVKSGYARNFLIPYGKAIFATKDNIKFEINKKEELERELIKKISIAKTKCEKIKNIKSIVIPAQVGIEGKLFGSVGSRDIAKKLSELSNIKIKKHEIYFLNGALKHVGQHKVIFKPHHSVSITVEINIVSQDKDK.

The protein belongs to the bacterial ribosomal protein bL9 family.

Its function is as follows. Binds to the 23S rRNA. The polypeptide is Large ribosomal subunit protein bL9 (Buchnera aphidicola subsp. Baizongia pistaciae (strain Bp)).